Reading from the N-terminus, the 107-residue chain is U1-lycotoxin-Ls1p (107 aa).

Positions 1 to 20 are cleaved as a signal peptide; it reads MMKVLVVVALLVTLISYSSS. Positions 21–41 are excised as a propeptide; the sequence is EGIDDLEADELLSLMANEQTR. Intrachain disulfides connect cysteine 44–cysteine 59, cysteine 51–cysteine 68, cysteine 58–cysteine 86, and cysteine 70–cysteine 84.

It belongs to the neurotoxin 19 (CSTX) family. 04 (U1-Lctx) subfamily. As to expression, expressed by the venom gland.

The protein localises to the secreted. This is U1-lycotoxin-Ls1p from Lycosa singoriensis (Wolf spider).